An 80-amino-acid polypeptide reads, in one-letter code: DNA-binding protein S1FA2 (80 aa).

Residues 54–59 carry the Nuclear localization signal motif; the sequence is PPRKKK. The segment covering 55-70 has biased composition (basic residues); the sequence is PRKKKPVSKKKMKREK. The tract at residues 55-80 is disordered; the sequence is PRKKKPVSKKKMKREKLKQGVSAPGE.

Belongs to the S1FA transcription factor family.

The protein localises to the nucleus. Its function is as follows. DNA-binding protein that specifically recognizes a negative element (S1F) within the RPS1 promoter. This is DNA-binding protein S1FA2 (S1FA2) from Oryza sativa subsp. japonica (Rice).